We begin with the raw amino-acid sequence, 453 residues long: Signal transduction histidine-protein kinase ArlS (453 aa).

2 consecutive transmembrane segments (helical) span residues 14-34 (ITTL…IFFL) and 157-177 (FVAI…SYIF). The 54-residue stretch at 179–232 (TQLTKPLVTMSNKMIQIRRDGFQNKLELKTNYEETDNLIDTFNDMMYQIEESFN) folds into the HAMP domain. A Histidine kinase domain is found at 240–453 (DASHELRTPL…QYTTFKIIFK (214 aa)). Residue His-243 is modified to Phosphohistidine; by autocatalysis.

Post-translationally, autophosphorylated.

The protein localises to the cell membrane. The catalysed reaction is ATP + protein L-histidine = ADP + protein N-phospho-L-histidine.. Member of the two-component regulatory system ArlS/ArlR. ArlS probably functions as a sensor protein kinase which is autophosphorylated at a histidine residue and transfers its phosphate group to ArlR. This chain is Signal transduction histidine-protein kinase ArlS (arlS), found in Staphylococcus haemolyticus (strain JCSC1435).